Reading from the N-terminus, the 223-residue chain is Ribosomal RNA small subunit methyltransferase G (223 aa).

S-adenosyl-L-methionine-binding positions include Gly82, Leu87, 133 to 134, and Arg151; that span reads AE.

Belongs to the methyltransferase superfamily. RNA methyltransferase RsmG family.

It localises to the cytoplasm. Specifically methylates the N7 position of guanine in position 518 of 16S rRNA. In Corynebacterium glutamicum (strain R), this protein is Ribosomal RNA small subunit methyltransferase G.